The following is a 335-amino-acid chain: Phenylalanine--tRNA ligase alpha subunit (335 aa).

A Mg(2+)-binding site is contributed by glutamate 262.

The protein belongs to the class-II aminoacyl-tRNA synthetase family. Phe-tRNA synthetase alpha subunit type 1 subfamily. As to quaternary structure, tetramer of two alpha and two beta subunits. It depends on Mg(2+) as a cofactor.

It is found in the cytoplasm. The catalysed reaction is tRNA(Phe) + L-phenylalanine + ATP = L-phenylalanyl-tRNA(Phe) + AMP + diphosphate + H(+). This chain is Phenylalanine--tRNA ligase alpha subunit, found in Prochlorococcus marinus (strain NATL2A).